The chain runs to 561 residues: MACPF domain-containing protein CAD1 (561 aa).

Residues 11-314 enclose the MACPF domain; it reads VPSSEALTTT…PPIEDLQYFL (304 aa). Residues 489–514 are disordered; sequence VASSGRLEPGGPSTSSSTEEVSGQSG. Positions 500 to 513 are enriched in polar residues; that stretch reads PSTSSSTEEVSGQS.

It belongs to the complement C6/C7/C8/C9 (TC 1.C.39) family. Mainly expressed in the vascular system.

Negatively controls the salicylic acid (SA)-mediated pathway of programmed cell death in plant immunity. The chain is MACPF domain-containing protein CAD1 (CAD1) from Arabidopsis thaliana (Mouse-ear cress).